The primary structure comprises 237 residues: NADH-ubiquinone oxidoreductase assembly factor N7BML (237 aa).

Residues valine 214–lysine 223 show a composition bias toward basic and acidic residues. The interval valine 214–glycine 237 is disordered.

This sequence belongs to the complex I NDUFA12 subunit family.

Its subcellular location is the mitochondrion. In terms of biological role, acts as an assembly factor of mitochondrial complex I. The sequence is that of NADH-ubiquinone oxidoreductase assembly factor N7BML from Yarrowia lipolytica (strain CLIB 122 / E 150) (Yeast).